The sequence spans 440 residues: Thymidine phosphorylase (440 aa).

This sequence belongs to the thymidine/pyrimidine-nucleoside phosphorylase family. In terms of assembly, homodimer.

It carries out the reaction thymidine + phosphate = 2-deoxy-alpha-D-ribose 1-phosphate + thymine. It participates in pyrimidine metabolism; dTMP biosynthesis via salvage pathway; dTMP from thymine: step 1/2. The enzymes which catalyze the reversible phosphorolysis of pyrimidine nucleosides are involved in the degradation of these compounds and in their utilization as carbon and energy sources, or in the rescue of pyrimidine bases for nucleotide synthesis. The protein is Thymidine phosphorylase of Salmonella choleraesuis (strain SC-B67).